A 1025-amino-acid chain; its full sequence is Transcription factor tau 131 kDa subunit (1025 aa).

Residues 1–26 show a composition bias toward basic and acidic residues; sequence MAAGKLKKEQQNQSAERESADTGKVN. The interval 1–71 is disordered; sequence MAAGKLKKEQ…EDEYNSERDS (71 aa). Residues 46-65 show a composition bias toward acidic residues; the sequence is DEEYDDEDVPHDLQLSEDEY. 5 TPR repeats span residues 128-161, 162-195, 196-229, 230-263, and 264-297; these read VAQL…DARN, FAAY…NASD, WEFW…NPME, WESI…NPYD, and ANIL…NVER. Residues 128-569 are sufficient to bind BDP1; it reads VAQLLSQANE…VDVVEMRKHQ (442 aa). The interval 309–334 is disordered; that stretch reads LDSSDEESAAEGEDADEKEPLEQDED. Ser311 is subject to Phosphoserine. Residues 311–325 are compositionally biased toward acidic residues; it reads SSDEESAAEGEDADE. 6 TPR repeats span residues 432–465, 467–501, 502–535, 536–569, 875–908, and 959–992; these read IDIR…TFSD, ADLY…EWRT, TDVF…EPDD, LDIR…RKHQ, PYLY…IPDD, and QEAD…YDDG.

As to quaternary structure, component of the TFIIIC complex composed of TFC1, TFC3, TFC4, TFC6, TFC7 and TFC8. The subunits are organized in two globular domains, tauA and tauB, connected by a proteolysis-sensitive and flexible linker. Interacts with TFC1, TFC3, TFC6, TFIIIB subunits BRF1 and BDP1, and with RNA polymerase III subunit RPC10. In terms of processing, phosphorylated.

The protein localises to the nucleus. In terms of biological role, TFIIIC mediates tRNA and 5S RNA gene activation by binding to intragenic promoter elements. Upstream of the transcription start site, TFIIIC assembles the initiation complex TFIIIB-TFIIIC-tDNA, which is sufficient for RNA polymerase III recruitment and function. Part of the tauA domain of TFIIIC that binds boxA DNA promoter sites of tRNA and similar genes. TFC4 is the TFIIIB-assembling subunit of TFIIIC and essential for viability. The chain is Transcription factor tau 131 kDa subunit (TFC4) from Saccharomyces cerevisiae (strain ATCC 204508 / S288c) (Baker's yeast).